Consider the following 317-residue polypeptide: tRNA dimethylallyltransferase (317 aa).

An ATP-binding site is contributed by 13–20 (GPTASGKS). 15–20 (TASGKS) is a binding site for substrate.

The protein belongs to the IPP transferase family. As to quaternary structure, monomer. The cofactor is Mg(2+).

It carries out the reaction adenosine(37) in tRNA + dimethylallyl diphosphate = N(6)-dimethylallyladenosine(37) in tRNA + diphosphate. Its function is as follows. Catalyzes the transfer of a dimethylallyl group onto the adenine at position 37 in tRNAs that read codons beginning with uridine, leading to the formation of N6-(dimethylallyl)adenosine (i(6)A). This is tRNA dimethylallyltransferase from Kineococcus radiotolerans (strain ATCC BAA-149 / DSM 14245 / SRS30216).